The sequence spans 149 residues: Large ribosomal subunit protein bL9 (149 aa).

This sequence belongs to the bacterial ribosomal protein bL9 family.

Functionally, binds to the 23S rRNA. The sequence is that of Large ribosomal subunit protein bL9 from Thiobacillus denitrificans (strain ATCC 25259 / T1).